The following is a 135-amino-acid chain: Protein PsiE homolog (135 aa).

Helical transmembrane passes span 20-40, 54-74, 82-102, and 107-127; these read VGLL…TIHL, YLLI…ALIV, HFPL…LIIV, and PIDT…LYLA.

This sequence belongs to the PsiE family.

The protein resides in the cell inner membrane. The protein is Protein PsiE homolog of Serratia proteamaculans (strain 568).